We begin with the raw amino-acid sequence, 71 residues long: NAD(P)H-quinone oxidoreductase subunit O (71 aa).

Belongs to the complex I NdhO subunit family. NDH-1 can be composed of about 15 different subunits; different subcomplexes with different compositions have been identified which probably have different functions.

It localises to the cellular thylakoid membrane. The catalysed reaction is a plastoquinone + NADH + (n+1) H(+)(in) = a plastoquinol + NAD(+) + n H(+)(out). It catalyses the reaction a plastoquinone + NADPH + (n+1) H(+)(in) = a plastoquinol + NADP(+) + n H(+)(out). Its function is as follows. NDH-1 shuttles electrons from an unknown electron donor, via FMN and iron-sulfur (Fe-S) centers, to quinones in the respiratory and/or the photosynthetic chain. The immediate electron acceptor for the enzyme in this species is believed to be plastoquinone. Couples the redox reaction to proton translocation, and thus conserves the redox energy in a proton gradient. Cyanobacterial NDH-1 also plays a role in inorganic carbon-concentration. The protein is NAD(P)H-quinone oxidoreductase subunit O of Nostoc punctiforme (strain ATCC 29133 / PCC 73102).